Here is a 480-residue protein sequence, read N- to C-terminus: Ribosome assembly protein rrb1 (480 aa).

Disordered stretches follow at residues 1 to 78 (MSKR…WLPG) and 155 to 176 (QHDE…ILEH). Composition is skewed to acidic residues over residues 28 to 52 (VDTE…YIEA) and 158 to 172 (ENDD…EEDP). Residues serine 163 and serine 166 each carry the phosphoserine modification. WD repeat units follow at residues 183-225 (GACN…RSLD), 289-329 (SHTA…KTSA), 334-375 (AHPG…SSSS), 385-425 (WHRA…DEEE), and 446-480 (MGQQ…TITF).

Associates with ribosomal protein L3.

The protein resides in the cytoplasm. It is found in the nucleus. The protein localises to the nucleolus. In terms of biological role, involved in regulation of L3 expression and stability and plays a role in early 60S ribosomal subunit assembly. May be required for proper assembly of pre-ribosomal particles during early ribosome biogenesis, presumably by targeting L3 onto the 35S precursor rRNA. This chain is Ribosome assembly protein rrb1 (rrb1), found in Schizosaccharomyces pombe (strain 972 / ATCC 24843) (Fission yeast).